The sequence spans 356 residues: Ubiquitin-conjugating enzyme E2 Z (356 aa).

Low complexity predominate over residues Met1–Ala16. A disordered region spans residues Met1 to Gly22. Residues Gln101–Val255 form the UBC core domain. Cys190 functions as the Glycyl thioester intermediate in the catalytic mechanism. A disordered region spans residues Asn334–Val356. Ser339 carries the phosphoserine modification.

Belongs to the ubiquitin-conjugating enzyme family.

Its subcellular location is the cytoplasm. The protein resides in the nucleus. The catalysed reaction is S-ubiquitinyl-[E1 ubiquitin-activating enzyme]-L-cysteine + [E2 ubiquitin-conjugating enzyme]-L-cysteine = [E1 ubiquitin-activating enzyme]-L-cysteine + S-ubiquitinyl-[E2 ubiquitin-conjugating enzyme]-L-cysteine.. It functions in the pathway protein modification; protein ubiquitination. Its function is as follows. Catalyzes the covalent attachment of ubiquitin to other proteins. Specific substrate for UBA6, not charged with ubiquitin by UBE1. May be involved in apoptosis regulation. This chain is Ubiquitin-conjugating enzyme E2 Z (Ube2z), found in Rattus norvegicus (Rat).